The chain runs to 264 residues: 14-3-3 protein homolog (264 aa).

Residues 236 to 258 show a composition bias toward low complexity; the sequence is SEAPAATEEQQQSSQAPAAQPTE. The disordered stretch occupies residues 236 to 264; sequence SEAPAATEEQQQSSQAPAAQPTEGKADQE.

The protein belongs to the 14-3-3 family.

In Candida albicans (strain SC5314 / ATCC MYA-2876) (Yeast), this protein is 14-3-3 protein homolog (BMH1).